We begin with the raw amino-acid sequence, 298 residues long: ATP synthase gamma chain (298 aa).

Belongs to the ATPase gamma chain family. In terms of assembly, F-type ATPases have 2 components, CF(1) - the catalytic core - and CF(0) - the membrane proton channel. CF(1) has five subunits: alpha(3), beta(3), gamma(1), delta(1), epsilon(1). CF(0) has three main subunits: a, b and c.

Its subcellular location is the cell inner membrane. Produces ATP from ADP in the presence of a proton gradient across the membrane. The gamma chain is believed to be important in regulating ATPase activity and the flow of protons through the CF(0) complex. This Acidithiobacillus ferridurans protein is ATP synthase gamma chain.